Consider the following 343-residue polypeptide: Follistatin (343 aa).

The N-terminal stretch at 1–28 (MLNQRIHPGMLVLLMFLYHFMEDHTAQA) is a signal peptide. A TB domain is found at 29–102 (GNCWLRQARN…TCENVDCGPG (74 aa)). 8 disulfide bridges follow: C31–C54, C41–C87, C55–C90, C94–C105, C99–C115, C117–C149, C121–C142, and C131–C163. The region spanning 93–116 (TCENVDCGPGKKCKMNKKNKPRCV) is the Follistatin-like 1 domain. Kazal-like domains are found at residues 99–165 (CGPG…KCKK), 185–240 (NAYC…KCIK), and 263–317 (RGRC…SCNS). N-linked (GlcNAc...) asparagine glycosylation occurs at N123. The region spanning 166-189 (TCRDVLCPGSSTCVVDQTNNAYCV) is the Follistatin-like 2 domain. Cystine bridges form between C191–C224, C195–C217, and C206–C238. A Follistatin-like 3 domain is found at 243-267 (SCEDIQCSAGKKCLWDFKVGRGRCA). Cystine bridges form between C269–C301, C273–C294, and C283–C315. N-linked (GlcNAc...) asparagine glycosylation occurs at N287. The disordered stretch occupies residues 315–343 (CNSINEDPEEEEEDEDQDYSFPISSILEW). Over residues 320 to 332 (EDPEEEEEDEDQD) the composition is skewed to acidic residues.

Monomer. Ciliary ganglion neurons. Levels are higher in the iris than the choroid.

The protein resides in the secreted. Binds directly to activin and functions as an activin antagonist. Inhibits activin A signaling in the iris and regulates somatostatin phenotype in ciliary ganglion neurons. Specific inhibitor of the biosynthesis and secretion of pituitary follicle stimulating hormone (FSH). This chain is Follistatin (FST), found in Gallus gallus (Chicken).